The primary structure comprises 229 residues: MSSLREIILDTETTGLDPQQGHRIVEIGAIEMVNKVLTGKHFHFYINPERDMPFEAYKIHGISGEFLKDKPLFKTIANDFLKFIADSTLIIHNAPFDIKFLNHELSLLKRTEIKFLELTNTIDTLVMARNMFPGARYSLDALCKRFKVDNSGRQLHGALKDAALLAEVYVALTGGRQSTFKMINKPDEINNLAVKCVDVQQIKRGIVVKPTKEELQKHKEFIDKILIQA.

2 residues coordinate a divalent metal cation: Asp-10 and Glu-12. 4 residues coordinate substrate: Asp-10, Glu-12, Glu-55, and His-60. Catalysis depends on His-156, which acts as the Proton acceptor. Position 161 (Asp-161) interacts with a divalent metal cation. Asp-161 contacts substrate.

As to quaternary structure, DNA polymerase III contains a core (composed of alpha, epsilon and theta chains) that associates with a tau subunit. This core dimerizes to form the POLIII' complex. PolIII' associates with the gamma complex (composed of gamma, delta, delta', psi and chi chains) and with the beta chain to form the complete DNA polymerase III complex. It depends on Mg(2+) as a cofactor. The cofactor is Mn(2+).

The enzyme catalyses DNA(n) + a 2'-deoxyribonucleoside 5'-triphosphate = DNA(n+1) + diphosphate. Functionally, DNA polymerase III is a complex, multichain enzyme responsible for most of the replicative synthesis in bacteria. The epsilon subunit contain the editing function and is a proofreading 3'-5' exonuclease. In Rickettsia prowazekii (strain Madrid E), this protein is DNA polymerase III subunit epsilon (dnaQ).